A 145-amino-acid polypeptide reads, in one-letter code: Large ribosomal subunit protein uL15 (145 aa).

The disordered stretch occupies residues 23 to 51; it reads IGSGWGKTGGRGHKGQKSRSGGKIRKSFE. The segment covering 32–47 has biased composition (basic residues); it reads GRGHKGQKSRSGGKIR.

This sequence belongs to the universal ribosomal protein uL15 family. As to quaternary structure, part of the 50S ribosomal subunit.

Its function is as follows. Binds to the 23S rRNA. This Buchnera aphidicola subsp. Cinara cedri (strain Cc) protein is Large ribosomal subunit protein uL15.